The following is an 823-amino-acid chain: ATM interactor (823 aa).

Residues 28 to 67 (GAAAAASGPWVPPGPRLRGSRPRPAGATQQPAVPAPPAGE) form a disordered region. Low complexity predominate over residues 49–59 (PRPAGATQQPA). Residues 84 to 109 (ILCTVRGCGKILPNSPALNMHLVKSH) form a C2H2-type 1 zinc finger. A C2H2-type 2; degenerate zinc finger spans residues 165 to 184 (HKCSKCSNSYGTEWDLKRHA). Over residues 214-225 (HEIPAEHRDPPS) the composition is skewed to basic and acidic residues. 3 disordered regions span residues 214–234 (HEIP…ENCA), 268–289 (EPSF…TPPR), and 610–634 (RSLL…NPGI). Positions 223–442 (PPSKKRKMEN…ADSSVSSCSQ (220 aa)) are required for formation of RAD51 foci. 2 stretches are compositionally biased toward polar residues: residues 275 to 286 (CGSNTDKQTLTT) and 613 to 629 (LSDT…SGPA).

As to quaternary structure, interacts via its C-terminus with ATM. Interacts with DYNLL1; this interaction inhibits ATMIN transcriptional activity and hence may play a role in a feedback loop whereby DYNLL1 inhibits transactivation of its own promoter by ATMIN. As to expression, ubiquitously expressed in normal tissues and cancer cell lines with highest levels in placenta and skeletal muscle.

It localises to the nucleus. Functionally, transcription factor. Plays a crucial role in cell survival and RAD51 foci formation in response to methylating DNA damage. Involved in regulating the activity of ATM in the absence of DNA damage. May play a role in stabilizing ATM. Binds to the DYNLL1 promoter and activates its transcription. This chain is ATM interactor (ATMIN), found in Homo sapiens (Human).